Here is a 1044-residue protein sequence, read N- to C-terminus: Isoleucine--tRNA ligase (1044 aa).

The short motif at 48–58 (PFATGLPHFGH) is the 'HIGH' region element. Residues 594–598 (KMSKS) carry the 'KMSKS' region motif. Lysine 597 is an ATP binding site.

This sequence belongs to the class-I aminoacyl-tRNA synthetase family. IleS type 2 subfamily. Monomer. The cofactor is Zn(2+).

The protein localises to the cytoplasm. The enzyme catalyses tRNA(Ile) + L-isoleucine + ATP = L-isoleucyl-tRNA(Ile) + AMP + diphosphate. In terms of biological role, catalyzes the attachment of isoleucine to tRNA(Ile). As IleRS can inadvertently accommodate and process structurally similar amino acids such as valine, to avoid such errors it has two additional distinct tRNA(Ile)-dependent editing activities. One activity is designated as 'pretransfer' editing and involves the hydrolysis of activated Val-AMP. The other activity is designated 'posttransfer' editing and involves deacylation of mischarged Val-tRNA(Ile). In Borrelia hermsii (strain HS1 / DAH), this protein is Isoleucine--tRNA ligase.